Here is a 114-residue protein sequence, read N- to C-terminus: Large ribosomal subunit protein uL22 (114 aa).

The protein belongs to the universal ribosomal protein uL22 family. In terms of assembly, part of the 50S ribosomal subunit.

Functionally, this protein binds specifically to 23S rRNA; its binding is stimulated by other ribosomal proteins, e.g. L4, L17, and L20. It is important during the early stages of 50S assembly. It makes multiple contacts with different domains of the 23S rRNA in the assembled 50S subunit and ribosome. Its function is as follows. The globular domain of the protein is located near the polypeptide exit tunnel on the outside of the subunit, while an extended beta-hairpin is found that lines the wall of the exit tunnel in the center of the 70S ribosome. This is Large ribosomal subunit protein uL22 from Desulfitobacterium hafniense (strain Y51).